The following is a 93-amino-acid chain: Alpha-elapitoxin-Oh3a (93 aa).

Positions 1–21 (MKTLLLTLVVVTIVCLDLGYT) are cleaved as a signal peptide. Intrachain disulfides connect C24/C42, C35/C63, C48/C52, C67/C78, and C79/C84.

It belongs to the three-finger toxin family. Long-chain subfamily. Type II alpha-neurotoxin sub-subfamily. As to expression, expressed by the venom gland.

It localises to the secreted. Its function is as follows. Binds to muscular and neuronal nicotinic acetylcholine receptor (nAChR) and inhibits acetylcholine from binding to the receptor, thereby impairing neuromuscular and neuronal transmission. Pseudo-irreversibly inhibits twitches in chick biventer cervicis nerve-muscle preparations in a concentration-dependent manner. The chain is Alpha-elapitoxin-Oh3a from Ophiophagus hannah (King cobra).